Consider the following 216-residue polypeptide: Cytidylate kinase (216 aa).

Position 7–15 (7–15) interacts with ATP; it reads GPAGTGKST.

It belongs to the cytidylate kinase family. Type 1 subfamily.

It localises to the cytoplasm. The enzyme catalyses CMP + ATP = CDP + ADP. It catalyses the reaction dCMP + ATP = dCDP + ADP. This chain is Cytidylate kinase, found in Chlamydia muridarum (strain MoPn / Nigg).